Reading from the N-terminus, the 432-residue chain is Glutamate--tRNA ligase 2 (432 aa).

The 'HIGH' region motif lies at 6-16; that stretch reads PSPTGDMHIGN. Residues 235–239 carry the 'KMSKS' region motif; that stretch reads KMSKR. Residue Lys-238 coordinates ATP.

The protein belongs to the class-I aminoacyl-tRNA synthetase family. Glutamate--tRNA ligase type 1 subfamily. As to quaternary structure, monomer.

The protein resides in the cytoplasm. It catalyses the reaction tRNA(Glu) + L-glutamate + ATP = L-glutamyl-tRNA(Glu) + AMP + diphosphate. Catalyzes the attachment of glutamate to tRNA(Glu) in a two-step reaction: glutamate is first activated by ATP to form Glu-AMP and then transferred to the acceptor end of tRNA(Glu). This chain is Glutamate--tRNA ligase 2, found in Sulfurimonas denitrificans (strain ATCC 33889 / DSM 1251) (Thiomicrospira denitrificans (strain ATCC 33889 / DSM 1251)).